Consider the following 263-residue polypeptide: 3-deoxy-manno-octulosonate cytidylyltransferase (263 aa).

The protein belongs to the KdsB family.

It is found in the cytoplasm. The enzyme catalyses 3-deoxy-alpha-D-manno-oct-2-ulosonate + CTP = CMP-3-deoxy-beta-D-manno-octulosonate + diphosphate. It functions in the pathway nucleotide-sugar biosynthesis; CMP-3-deoxy-D-manno-octulosonate biosynthesis; CMP-3-deoxy-D-manno-octulosonate from 3-deoxy-D-manno-octulosonate and CTP: step 1/1. Its pathway is bacterial outer membrane biogenesis; lipopolysaccharide biosynthesis. Activates KDO (a required 8-carbon sugar) for incorporation into bacterial lipopolysaccharide in Gram-negative bacteria. The sequence is that of 3-deoxy-manno-octulosonate cytidylyltransferase from Burkholderia mallei (strain NCTC 10229).